The sequence spans 573 residues: Proline--tRNA ligase (573 aa).

It belongs to the class-II aminoacyl-tRNA synthetase family. ProS type 1 subfamily. In terms of assembly, homodimer.

Its subcellular location is the cytoplasm. It carries out the reaction tRNA(Pro) + L-proline + ATP = L-prolyl-tRNA(Pro) + AMP + diphosphate. Catalyzes the attachment of proline to tRNA(Pro) in a two-step reaction: proline is first activated by ATP to form Pro-AMP and then transferred to the acceptor end of tRNA(Pro). As ProRS can inadvertently accommodate and process non-cognate amino acids such as alanine and cysteine, to avoid such errors it has two additional distinct editing activities against alanine. One activity is designated as 'pretransfer' editing and involves the tRNA(Pro)-independent hydrolysis of activated Ala-AMP. The other activity is designated 'posttransfer' editing and involves deacylation of mischarged Ala-tRNA(Pro). The misacylated Cys-tRNA(Pro) is not edited by ProRS. The sequence is that of Proline--tRNA ligase from Caldanaerobacter subterraneus subsp. tengcongensis (strain DSM 15242 / JCM 11007 / NBRC 100824 / MB4) (Thermoanaerobacter tengcongensis).